A 115-amino-acid chain; its full sequence is Succinate dehydrogenase assembly factor 3, mitochondrial (115 aa).

Belongs to the complex I LYR family. SDHAF3 subfamily. In terms of assembly, interacts with the iron-sulfur protein subunit within the SDH catalytic dimer.

Its subcellular location is the mitochondrion matrix. Functionally, plays an essential role in the assembly of succinate dehydrogenase (SDH), an enzyme complex (also referred to as respiratory complex II) that is a component of both the tricarboxylic acid (TCA) cycle and the mitochondrial electron transport chain, and which couples the oxidation of succinate to fumarate with the reduction of ubiquinone (coenzyme Q) to ubiquinol. Promotes maturation of the iron-sulfur protein subunit of the SDH catalytic dimer, protecting it from the deleterious effects of oxidants. May act together with SDHAF1. The chain is Succinate dehydrogenase assembly factor 3, mitochondrial (acn9) from Nematostella vectensis (Starlet sea anemone).